Here is a 214-residue protein sequence, read N- to C-terminus: Adenylate kinase (214 aa).

10–15 contacts ATP; that stretch reads GAGKGT. The interval 30–59 is NMP; the sequence is STGDMFRDHKARGTEIGKQVQAIMDGGGLV. Residues Thr-31, Arg-36, 57 to 59, 85 to 88, and Gln-92 each bind AMP; these read GLV and GYPR. Positions 126–163 are LID; sequence GRRSCPRCGAVYHVSQNPPRRAGYCDRDDAELVQREDD. Arg-127 serves as a coordination point for ATP. Positions 130 and 133 each coordinate Zn(2+). Position 136 to 137 (136 to 137) interacts with ATP; it reads VY. Residues Cys-150 and Asp-153 each coordinate Zn(2+). Arg-160 and Arg-171 together coordinate AMP. Residue Gly-199 participates in ATP binding.

This sequence belongs to the adenylate kinase family. In terms of assembly, monomer.

It localises to the cytoplasm. The catalysed reaction is AMP + ATP = 2 ADP. Its pathway is purine metabolism; AMP biosynthesis via salvage pathway; AMP from ADP: step 1/1. Catalyzes the reversible transfer of the terminal phosphate group between ATP and AMP. Plays an important role in cellular energy homeostasis and in adenine nucleotide metabolism. The sequence is that of Adenylate kinase from Anaeromyxobacter dehalogenans (strain 2CP-C).